Consider the following 217-residue polypeptide: Protein matrimony (217 aa).

The POLO box domain (PBD)-binding signature appears at 39 to 41; that stretch reads STP. S63 and S66 each carry phosphoserine. Residues 83-106 form a disordered region; it reads KQQQQQQHQHCHRTQLKPPPFVLP. The SAM domain occupies 157-217; the sequence is NHAANVEQIL…NRIMDVLHTL (61 aa).

As to quaternary structure, interacts with polo. Interacts with cort. Post-translationally, probably ubiquitinated: degraded during the oocyte-to-embryo transition by the anaphase promoting complex/cyclosome (APC/C) containing cort protein.

It localises to the nucleus. It is found in the chromosome. Its function is as follows. Polo kinase inhibitor required to maintain G2 arrest in the meiotic cell cycle in females. Holds heterochromatically paired homologs together from the end of pachytene until metaphase I. Haploinsufficient locus for homologous achiasmate segregation and may be required for the maintenance of heterochromatic pairings. In Drosophila melanogaster (Fruit fly), this protein is Protein matrimony.